The sequence spans 199 residues: N-(5'-phosphoribosyl)anthranilate isomerase (199 aa).

The protein belongs to the TrpF family.

The catalysed reaction is N-(5-phospho-beta-D-ribosyl)anthranilate = 1-(2-carboxyphenylamino)-1-deoxy-D-ribulose 5-phosphate. It participates in amino-acid biosynthesis; L-tryptophan biosynthesis; L-tryptophan from chorismate: step 3/5. This Lacticaseibacillus paracasei (strain ATCC 334 / BCRC 17002 / CCUG 31169 / CIP 107868 / KCTC 3260 / NRRL B-441) (Lactobacillus paracasei) protein is N-(5'-phosphoribosyl)anthranilate isomerase.